The following is a 117-amino-acid chain: Large ribosomal subunit protein uL22 (117 aa).

The protein belongs to the universal ribosomal protein uL22 family. In terms of assembly, part of the 50S ribosomal subunit.

This protein binds specifically to 23S rRNA; its binding is stimulated by other ribosomal proteins, e.g. L4, L17, and L20. It is important during the early stages of 50S assembly. It makes multiple contacts with different domains of the 23S rRNA in the assembled 50S subunit and ribosome. Functionally, the globular domain of the protein is located near the polypeptide exit tunnel on the outside of the subunit, while an extended beta-hairpin is found that lines the wall of the exit tunnel in the center of the 70S ribosome. This Lactobacillus delbrueckii subsp. bulgaricus (strain ATCC 11842 / DSM 20081 / BCRC 10696 / JCM 1002 / NBRC 13953 / NCIMB 11778 / NCTC 12712 / WDCM 00102 / Lb 14) protein is Large ribosomal subunit protein uL22.